Consider the following 25-residue polypeptide: Repetitive proline-rich cell wall protein (25 aa).

Residues 1–25 (NYDKPPVEKPPVYKPPVEKPPVYKP) are disordered. Repeat copies occupy residues 5-9 (PPVEK), 10-14 (PPVYK), 15-19 (PPVEK), and 20-24 (PPVYK). The 4 X 5 AA tandem repeats of P-P-V-[EY]-K stretch occupies residues 5–24 (PPVEKPPVYKPPVEKPPVYK). A 4-hydroxyproline mark is found at Pro6, Pro11, Pro16, and Pro21. Residues 8–25 (EKPPVYKPPVEKPPVYKP) show a composition bias toward pro residues.

This sequence belongs to the plant proline-rich protein superfamily. ENOD12 family.

It localises to the secreted. It is found in the cell wall. The polypeptide is Repetitive proline-rich cell wall protein (Phaseolus vulgaris (Kidney bean)).